A 219-amino-acid polypeptide reads, in one-letter code: Small ribosomal subunit protein uS3c (219 aa).

Residues 47-118 (IKKNIRISSG…KINIAITRIT (72 aa)) form the KH type-2 domain.

This sequence belongs to the universal ribosomal protein uS3 family. In terms of assembly, part of the 30S ribosomal subunit.

It is found in the plastid. The protein resides in the chloroplast. This Citrus sinensis (Sweet orange) protein is Small ribosomal subunit protein uS3c (rps3).